The chain runs to 4513 residues: Dynein-1-beta heavy chain, flagellar inner arm I1 complex (4513 aa).

Positions 1–1806 (MEPGDEGKGH…IVKQVLSVFY (1806 aa)) are stem. Coiled coils occupy residues 192 to 223 (KAAA…NQQD), 1544 to 1577 (TAQG…RQQF), and 1704 to 1727 (THEC…LKKK). AAA stretches follow at residues 1807–2028 (YGYE…PIAR), 2089–2350 (RAIE…VPEN), 2458–2706 (FKPA…IIQG), and 2808–3059 (DYAL…LKRR). Residues 1845–1852 (GPAGTGKT), 2127–2134 (GRTGSGKS), 2497–2504 (GNVGVGKT), and 2848–2855 (GVGGSGRK) contribute to the ATP site. Coiled coils occupy residues 3107-3193 (AAMK…LTKK), 3301-3384 (KRAK…SISE), and 3499-3519 (RLKV…NAIQ). The segment at 3107–3384 (AAMKKVAEEK…RVRWEASISE (278 aa)) is stalk. AAA stretches follow at residues 3443–3674 (LANP…EVNA) and 3890–4109 (ATTY…LLKS).

The I1 inner arm complex (also known as the f dynein complex) is a two-headed isoform composed of two heavy chains (1-alpha and 1-beta), three intermediate chains and three light chains. I1 occupies a specific position proximal to the first radial spoke and repeats every 96 nm along the length of the axoneme.

It is found in the cell projection. The protein localises to the cilium. Its subcellular location is the flagellum. It localises to the cytoplasm. The protein resides in the cytoskeleton. It is found in the flagellum axoneme. Force generating protein of eukaryotic cilia and flagella. Produces force towards the minus ends of microtubules. Dynein has ATPase activity; the force-producing power stroke is thought to occur on release of ADP. Required for assembly of the I1 inner arm complex and its targeting to the appropriate axoneme location. Also required for phototaxis. The sequence is that of Dynein-1-beta heavy chain, flagellar inner arm I1 complex (DHC10) from Chlamydomonas reinhardtii (Chlamydomonas smithii).